The sequence spans 296 residues: Probable endonuclease 4 (296 aa).

Zn(2+) contacts are provided by His-68, His-109, Glu-144, Asp-178, His-181, His-213, Asp-226, His-228, and Glu-258.

It belongs to the AP endonuclease 2 family. Zn(2+) serves as cofactor.

The catalysed reaction is Endonucleolytic cleavage to 5'-phosphooligonucleotide end-products.. Functionally, endonuclease IV plays a role in DNA repair. It cleaves phosphodiester bonds at apurinic or apyrimidinic (AP) sites, generating a 3'-hydroxyl group and a 5'-terminal sugar phosphate. The sequence is that of Probable endonuclease 4 from Staphylococcus saprophyticus subsp. saprophyticus (strain ATCC 15305 / DSM 20229 / NCIMB 8711 / NCTC 7292 / S-41).